Reading from the N-terminus, the 476-residue chain is Bifunctional protein HldE (476 aa).

The ribokinase stretch occupies residues 1-319; the sequence is MKISLPAFEK…AALNLSHGES (319 aa). 195–198 provides a ligand contact to ATP; it reads NMSE. Aspartate 264 is an active-site residue. The interval 345-476 is cytidylyltransferase; it reads MTNGCFDILH…AIIENIMAKQ (132 aa).

The protein in the N-terminal section; belongs to the carbohydrate kinase PfkB family. It in the C-terminal section; belongs to the cytidylyltransferase family. In terms of assembly, homodimer.

It catalyses the reaction D-glycero-beta-D-manno-heptose 7-phosphate + ATP = D-glycero-beta-D-manno-heptose 1,7-bisphosphate + ADP + H(+). The catalysed reaction is D-glycero-beta-D-manno-heptose 1-phosphate + ATP + H(+) = ADP-D-glycero-beta-D-manno-heptose + diphosphate. It participates in nucleotide-sugar biosynthesis; ADP-L-glycero-beta-D-manno-heptose biosynthesis; ADP-L-glycero-beta-D-manno-heptose from D-glycero-beta-D-manno-heptose 7-phosphate: step 1/4. Its pathway is nucleotide-sugar biosynthesis; ADP-L-glycero-beta-D-manno-heptose biosynthesis; ADP-L-glycero-beta-D-manno-heptose from D-glycero-beta-D-manno-heptose 7-phosphate: step 3/4. Functionally, catalyzes the phosphorylation of D-glycero-D-manno-heptose 7-phosphate at the C-1 position to selectively form D-glycero-beta-D-manno-heptose-1,7-bisphosphate. Its function is as follows. Catalyzes the ADP transfer from ATP to D-glycero-beta-D-manno-heptose 1-phosphate, yielding ADP-D-glycero-beta-D-manno-heptose. The sequence is that of Bifunctional protein HldE from Shewanella loihica (strain ATCC BAA-1088 / PV-4).